We begin with the raw amino-acid sequence, 219 residues long: N-(5'-phosphoribosyl)anthranilate isomerase (219 aa).

This sequence belongs to the TrpF family.

The catalysed reaction is N-(5-phospho-beta-D-ribosyl)anthranilate = 1-(2-carboxyphenylamino)-1-deoxy-D-ribulose 5-phosphate. It functions in the pathway amino-acid biosynthesis; L-tryptophan biosynthesis; L-tryptophan from chorismate: step 3/5. The polypeptide is N-(5'-phosphoribosyl)anthranilate isomerase (Dehalococcoides mccartyi (strain ATCC BAA-2266 / KCTC 15142 / 195) (Dehalococcoides ethenogenes (strain 195))).